A 340-amino-acid polypeptide reads, in one-letter code: Ketol-acid reductoisomerase (NADP(+)) (340 aa).

Residues 1-182 enclose the KARI N-terminal Rossmann domain; that stretch reads MRVYYDRDCD…GGGRSGIIET (182 aa). NADP(+) is bound by residues 24-27, Arg48, Ser51, Ser53, and 83-86; these read YGSQ and DELQ. His108 is a catalytic residue. Gly134 lines the NADP(+) pocket. In terms of domain architecture, KARI C-terminal knotted spans 183–329; that stretch reads NFRQECETDL…EKLRGMMPWI (147 aa). Asp191, Glu195, Glu227, and Glu231 together coordinate Mg(2+). Residue Ser252 participates in substrate binding.

Belongs to the ketol-acid reductoisomerase family. The cofactor is Mg(2+).

The enzyme catalyses (2R)-2,3-dihydroxy-3-methylbutanoate + NADP(+) = (2S)-2-acetolactate + NADPH + H(+). It catalyses the reaction (2R,3R)-2,3-dihydroxy-3-methylpentanoate + NADP(+) = (S)-2-ethyl-2-hydroxy-3-oxobutanoate + NADPH + H(+). It participates in amino-acid biosynthesis; L-isoleucine biosynthesis; L-isoleucine from 2-oxobutanoate: step 2/4. Its pathway is amino-acid biosynthesis; L-valine biosynthesis; L-valine from pyruvate: step 2/4. In terms of biological role, involved in the biosynthesis of branched-chain amino acids (BCAA). Catalyzes an alkyl-migration followed by a ketol-acid reduction of (S)-2-acetolactate (S2AL) to yield (R)-2,3-dihydroxy-isovalerate. In the isomerase reaction, S2AL is rearranged via a Mg-dependent methyl migration to produce 3-hydroxy-3-methyl-2-ketobutyrate (HMKB). In the reductase reaction, this 2-ketoacid undergoes a metal-dependent reduction by NADPH to yield (R)-2,3-dihydroxy-isovalerate. The sequence is that of Ketol-acid reductoisomerase (NADP(+)) from Paracoccus denitrificans (strain Pd 1222).